Consider the following 319-residue polypeptide: NADH-cytochrome b5 reductase 2 (319 aa).

A helical membrane pass occupies residues 30-46 (LAPVYLTVGLAGLGVGL). An FAD-binding FR-type domain is found at 69–173 (QGWVDLKLSE…KGPLPKYPWE (105 aa)). 176 to 211 (KHQHICLIAGGTGITPMYQLARHIFKNPEDKTKVTL) is an FAD binding site.

This sequence belongs to the flavoprotein pyridine nucleotide cytochrome reductase family. FAD is required as a cofactor.

It localises to the mitochondrion outer membrane. The catalysed reaction is 2 Fe(III)-[cytochrome b5] + NADH = 2 Fe(II)-[cytochrome b5] + NAD(+) + H(+). Its function is as follows. May mediate the reduction of outer membrane cytochrome b5. This is NADH-cytochrome b5 reductase 2 (mcr1) from Aspergillus terreus (strain NIH 2624 / FGSC A1156).